Reading from the N-terminus, the 386-residue chain is Cytotoxic granule associated RNA binding protein TIA1 (386 aa).

Met-1 is modified (N-acetylmethionine). RRM domains lie at 7–83, 106–184, and 214–286; these read KTLY…WATT, FHVF…WATR, and CTVY…WGKE. Residues 354–386 form a disordered region; sequence MGPNYGVQPPQGQNGSMLPNQPSGYRVAGYETQ. Over residues 363–376 the composition is skewed to polar residues; the sequence is PQGQNGSMLPNQPS.

In terms of assembly, homooligomer; homooligomerization is induced by Zn(2+). Interacts with FASTK; the interactions leads to its phosphorylation. Interacts (via RRM1 and the C-terminal glutamine-rich (Q) sequence) with SNRPC/U1-C (via N-terminus); thereby facilitating spliceosomal U1 snRNP recruitment to 5' splice sites. In terms of processing, phosphorylated by FASTK; phosphorylation occurs after FAS ligation in FAS-mediated apoptosis and before DNA fragmentation. As to expression, expressed in heart, small intestine, kidney, liver, lung, skeletal muscle, testes, pancreas, and ovary (at protein level).

The protein resides in the nucleus. It localises to the cytoplasm. It is found in the stress granule. Its function is as follows. RNA-binding protein involved in the regulation of alternative pre-RNA splicing and mRNA translation by binding to uridine-rich (U-rich) RNA sequences. Binds to U-rich sequences immediately downstream from a 5' splice sites in a uridine-rich small nuclear ribonucleoprotein (U snRNP)-dependent fashion, thereby modulating alternative pre-RNA splicing. Preferably binds to the U-rich IAS1 sequence in a U1 snRNP-dependent manner; this binding is optimal if a 5' splice site is adjacent to IAS1. Activates the use of heterologous 5' splice sites; the activation depends on the intron sequence downstream from the 5' splice site, with a preference for a downstream U-rich sequence. By interacting with SNRPC/U1-C, promotes recruitment and binding of spliceosomal U1 snRNP to 5' splice sites followed by U-rich sequences, thereby facilitating atypical 5' splice site recognition by U1 snRNP. Activates splicing of alternative exons with weak 5' splice sites followed by a U-rich stretch on its own pre-mRNA and on TIAR mRNA. Acts as a modulator of alternative splicing for the apoptotic FAS receptor, thereby promoting apoptosis. Binds to the 5' splice site region of FAS intron 5 to promote accumulation of transcripts that include exon 6 at the expense of transcripts in which exon 6 is skipped, thereby leading to the transcription of a membrane-bound apoptotic FAS receptor, which promotes apoptosis. Binds to a conserved AU-rich cis element in COL2A1 intron 2 and modulates alternative splicing of COL2A1 exon 2. Also binds to the equivalent AT-rich element in COL2A1 genomic DNA, and may thereby be involved in the regulation of transcription. Binds specifically to a polypyrimidine-rich controlling element (PCE) located between the weak 5' splice site and the intronic splicing silencer of CFTR mRNA to promote exon 9 inclusion, thereby antagonizing PTB1 and its role in exon skipping of CFTR exon 9. Involved in the repression of mRNA translation by binding to AU-rich elements (AREs) located in mRNA 3' untranslated regions (3' UTRs), including target ARE-bearing mRNAs encoding TNF and PTGS2. Also participates in the cellular response to environmental stress, by acting downstream of the stress-induced phosphorylation of EIF2S1/EIF2A to promote the recruitment of untranslated mRNAs to cytoplasmic stress granules (SGs), leading to stress-induced translational arrest. Formation and recruitment to SGs is regulated by Zn(2+). Possesses nucleolytic activity against cytotoxic lymphocyte target cells. Functionally, displays enhanced splicing regulatory activity compared with TIA isoform Long. This Homo sapiens (Human) protein is Cytotoxic granule associated RNA binding protein TIA1 (TIA1).